The following is a 957-amino-acid chain: Bifunctional glutamine synthetase adenylyltransferase/adenylyl-removing enzyme (957 aa).

Residues Met1–Glu449 are adenylyl removase. The interval Ser457 to Glu957 is adenylyl transferase.

Belongs to the GlnE family. The cofactor is Mg(2+).

It catalyses the reaction [glutamine synthetase]-O(4)-(5'-adenylyl)-L-tyrosine + phosphate = [glutamine synthetase]-L-tyrosine + ADP. It carries out the reaction [glutamine synthetase]-L-tyrosine + ATP = [glutamine synthetase]-O(4)-(5'-adenylyl)-L-tyrosine + diphosphate. In terms of biological role, involved in the regulation of glutamine synthetase GlnA, a key enzyme in the process to assimilate ammonia. When cellular nitrogen levels are high, the C-terminal adenylyl transferase (AT) inactivates GlnA by covalent transfer of an adenylyl group from ATP to specific tyrosine residue of GlnA, thus reducing its activity. Conversely, when nitrogen levels are low, the N-terminal adenylyl removase (AR) activates GlnA by removing the adenylyl group by phosphorolysis, increasing its activity. The regulatory region of GlnE binds the signal transduction protein PII (GlnB) which indicates the nitrogen status of the cell. The sequence is that of Bifunctional glutamine synthetase adenylyltransferase/adenylyl-removing enzyme from Photobacterium profundum (strain SS9).